Here is a 321-residue protein sequence, read N- to C-terminus: Transmembrane and ubiquitin-like domain-containing protein 2 (321 aa).

Residues 36–56 form a helical membrane-spanning segment; it reads VMVVAGVVVLILALVLAWLST. Disordered stretches follow at residues 87-131 and 145-170; these read LVAG…GGVE and KRQA…LPPS. Residues 104–120 show a composition bias toward basic and acidic residues; sequence EGNDEKAEEAGEGRGDS. Residues 174 to 247 form the Ubiquitin-like domain; sequence ITVRLKFLND…IHCHRSPPGS (74 aa). The next 2 membrane-spanning stretches (helical) occupy residues 266-286 and 295-315; these read LGVN…GVVW and FFTA…SFLV.

It is found in the membrane. This Homo sapiens (Human) protein is Transmembrane and ubiquitin-like domain-containing protein 2 (TMUB2).